Reading from the N-terminus, the 678-residue chain is Penicillin-binding protein activator LpoA (678 aa).

An N-terminal signal peptide occupies residues 1–26 (MVPSTFSRLKAARCLPVVLAALIFAG). Cysteine 27 carries N-palmitoyl cysteine lipidation. The S-diacylglycerol cysteine moiety is linked to residue cysteine 27. Disordered regions lie at residues 304 to 338 (AEQP…SVPV) and 495 to 530 (IALT…QFTN). The segment covering 513-529 (TTNNPTLQTTPTDDQFT) has biased composition (low complexity).

It belongs to the LpoA family. Interacts with PBP1a.

The protein resides in the cell outer membrane. Functionally, regulator of peptidoglycan synthesis that is essential for the function of penicillin-binding protein 1A (PBP1a). The sequence is that of Penicillin-binding protein activator LpoA from Escherichia coli O6:H1 (strain CFT073 / ATCC 700928 / UPEC).